A 397-amino-acid chain; its full sequence is t-SNARE affecting a late Golgi compartment protein 2 (397 aa).

Topologically, residues 1–317 are cytoplasmic; sequence MFRDRTNLFL…HYQKRTQKCK (317 aa). Residues 74–96 adopt a coiled-coil conformation; sequence DIAQDVDDYLLEVRRLSEQLAKV. Position 109 is a phosphoserine (Ser-109). Residues 244-306 form the t-SNARE coiled-coil homology domain; the sequence is EAYLRERDEE…KSADKELNKA (63 aa). Residues 318–338 form a helical; Anchor for type IV membrane protein membrane-spanning segment; the sequence is VILLLTLCVIALFFFVMLKPH. Over 339–397 the chain is Vesicular; sequence GGGSGGRNNGSNKYNNDDNKTVNNSHDDGSNTHINDEESNLPSIVEVTESENDALDDLL. A disordered region spans residues 341-397; it reads GSGGRNNGSNKYNNDDNKTVNNSHDDGSNTHINDEESNLPSIVEVTESENDALDDLL. Positions 353-374 are enriched in basic and acidic residues; the sequence is NNDDNKTVNNSHDDGSNTHIND. Acidic residues predominate over residues 386-397; it reads TESENDALDDLL.

Belongs to the syntaxin family. In terms of assembly, interacts with VPS45.

It localises to the golgi apparatus. The protein resides in the trans-Golgi network membrane. It is found in the endosome membrane. Its function is as follows. t-SNARE that functions in transport from the endosome to the late Golgi and on the endocytic pathway. The polypeptide is t-SNARE affecting a late Golgi compartment protein 2 (TLG2) (Saccharomyces cerevisiae (strain ATCC 204508 / S288c) (Baker's yeast)).